Here is a 252-residue protein sequence, read N- to C-terminus: 3-deoxy-manno-octulosonate cytidylyltransferase (252 aa).

It belongs to the KdsB family.

It localises to the cytoplasm. The catalysed reaction is 3-deoxy-alpha-D-manno-oct-2-ulosonate + CTP = CMP-3-deoxy-beta-D-manno-octulosonate + diphosphate. It participates in nucleotide-sugar biosynthesis; CMP-3-deoxy-D-manno-octulosonate biosynthesis; CMP-3-deoxy-D-manno-octulosonate from 3-deoxy-D-manno-octulosonate and CTP: step 1/1. Its pathway is bacterial outer membrane biogenesis; lipopolysaccharide biosynthesis. Functionally, activates KDO (a required 8-carbon sugar) for incorporation into bacterial lipopolysaccharide in Gram-negative bacteria. This chain is 3-deoxy-manno-octulosonate cytidylyltransferase, found in Solibacter usitatus (strain Ellin6076).